Here is a 421-residue protein sequence, read N- to C-terminus: 4-hydroxy-3-methylbut-2-en-1-yl diphosphate synthase (flavodoxin) (421 aa).

[4Fe-4S] cluster contacts are provided by cysteine 298, cysteine 301, cysteine 344, and glutamate 351.

The protein belongs to the IspG family. The cofactor is [4Fe-4S] cluster.

It catalyses the reaction (2E)-4-hydroxy-3-methylbut-2-enyl diphosphate + oxidized [flavodoxin] + H2O + 2 H(+) = 2-C-methyl-D-erythritol 2,4-cyclic diphosphate + reduced [flavodoxin]. It functions in the pathway isoprenoid biosynthesis; isopentenyl diphosphate biosynthesis via DXP pathway; isopentenyl diphosphate from 1-deoxy-D-xylulose 5-phosphate: step 5/6. In terms of biological role, converts 2C-methyl-D-erythritol 2,4-cyclodiphosphate (ME-2,4cPP) into 1-hydroxy-2-methyl-2-(E)-butenyl 4-diphosphate. The sequence is that of 4-hydroxy-3-methylbut-2-en-1-yl diphosphate synthase (flavodoxin) from Neisseria gonorrhoeae (strain ATCC 700825 / FA 1090).